The sequence spans 234 residues: Small ribosomal subunit protein uS2 (234 aa).

The protein belongs to the universal ribosomal protein uS2 family.

The chain is Small ribosomal subunit protein uS2 from Prochlorococcus marinus (strain MIT 9515).